The following is a 440-amino-acid chain: Chorismate synthase 1, chloroplastic (440 aa).

The transit peptide at 1 to 54 (MASFVPTKQFVGASSSSDIGSSRLVSLQLPSKFSSSNFHLPSRPSQLKRLEIQA) directs the protein to the chloroplast. The disordered stretch occupies residues 100 to 147 (RRRPGQSRITTPRKETDTCKISSGTADGLTTGSPIKVEVPNTDQRGND). The span at 118–132 (CKISSGTADGLTTGS) shows a compositional bias: polar residues.

The protein belongs to the chorismate synthase family. As to quaternary structure, homotetramer. FMNH2 serves as cofactor. Predominantly expressed in flowers and roots and, to a lesser extent, in stems, leaves, and cotyledons.

It is found in the plastid. It localises to the chloroplast. It carries out the reaction 5-O-(1-carboxyvinyl)-3-phosphoshikimate = chorismate + phosphate. It functions in the pathway metabolic intermediate biosynthesis; chorismate biosynthesis; chorismate from D-erythrose 4-phosphate and phosphoenolpyruvate: step 7/7. Its function is as follows. Catalyzes the last common step of the biosynthesis of aromatic amino acids, produced via the shikimic acid pathway. This chain is Chorismate synthase 1, chloroplastic (CS1), found in Solanum lycopersicum (Tomato).